Consider the following 370-residue polypeptide: Homoserine O-acetyltransferase (370 aa).

The 307-residue stretch at 44–350 (NAILVAHAWT…AYGHDAFLLE (307 aa)) folds into the AB hydrolase-1 domain. The active-site Nucleophile is the Ser150. Arg217 is a substrate binding site. Residues Asp311 and His344 contribute to the active site. Asp345 contacts substrate.

This sequence belongs to the AB hydrolase superfamily. MetX family. Homodimer.

The protein resides in the cytoplasm. It catalyses the reaction L-homoserine + acetyl-CoA = O-acetyl-L-homoserine + CoA. Its pathway is amino-acid biosynthesis; L-methionine biosynthesis via de novo pathway; O-acetyl-L-homoserine from L-homoserine: step 1/1. Its function is as follows. Transfers an acetyl group from acetyl-CoA to L-homoserine, forming acetyl-L-homoserine. This is Homoserine O-acetyltransferase from Geotalea uraniireducens (strain Rf4) (Geobacter uraniireducens).